A 218-amino-acid polypeptide reads, in one-letter code: Small ribosomal subunit protein uS3c (218 aa).

Residues 39-109 (IRNYVKVNLS…QIRINVTELK (71 aa)) enclose the KH type-2 domain.

It belongs to the universal ribosomal protein uS3 family. Part of the 30S ribosomal subunit.

It localises to the plastid. Its subcellular location is the chloroplast. This chain is Small ribosomal subunit protein uS3c (rps3), found in Rhodomonas salina (Cryptomonas salina).